The sequence spans 212 residues: Endoplasmic reticulum vesicle protein 25 (212 aa).

The first 21 residues, 1-21 (MKSFAACVLLLCALFFEQVFA), serve as a signal peptide directing secretion. The Lumenal segment spans residues 22-181 (VRFDIPASTK…TNESTNRRVR (160 aa)). The GOLD domain occupies 34–122 (QVCIRDFVSE…SRSIELDIES (89 aa)). The helical transmembrane segment at 182–202 (NFSIAVIVVLVALGAWQVNYM) threads the bilayer. Over 203–212 (KNFFRAKHII) the chain is Cytoplasmic.

It belongs to the EMP24/GP25L family.

The protein resides in the endoplasmic reticulum membrane. It localises to the golgi apparatus membrane. Its function is as follows. Constituent of COPII-coated endoplasmic reticulum-derived transport vesicles. Required for efficient transport of a subset of secretory proteins to the Golgi. Facilitates retrograde transport from the Golgi to the endoplasmic reticulum. In Kluyveromyces lactis (strain ATCC 8585 / CBS 2359 / DSM 70799 / NBRC 1267 / NRRL Y-1140 / WM37) (Yeast), this protein is Endoplasmic reticulum vesicle protein 25 (ERV25).